Consider the following 717-residue polypeptide: DNA-binding protein RFX2 (717 aa).

The segment at 1–28 is disordered; it reads MQNSEGGADSPASVALRPAAQPMPASPQ. Residue serine 26 is modified to Phosphoserine. The segment at residues 194-269 is a DNA-binding region (RFX-type winged-helix); that stretch reads HLQWLLDNYE…YHYYGIRLKP (76 aa). The tract at residues 286–318 is disordered; the sequence is RQQPTHQKPRYRPAQKSDSLGDGSAHSNMHGMP. At serine 411 the chain carries Phosphoserine. Basic and acidic residues predominate over residues 685 to 710; sequence DGHSSEADVDGRSLGEPLVKRERSDP. A disordered region spans residues 685-717; that stretch reads DGHSSEADVDGRSLGEPLVKRERSDPSHPLQGI.

The protein belongs to the RFX family. In terms of assembly, homodimer; probably only forms homodimers in testis. Heterodimer; heterodimerizes with RFX1 and RFX3.

The protein resides in the nucleus. It localises to the cytoplasm. Transcription factor that acts as a key regulator of spermatogenesis. Acts by regulating expression of genes required for the haploid phase during spermiogenesis, such as genes required for cilium assembly and function. Recognizes and binds the X-box, a regulatory motif with DNA sequence 5'-GTNRCC(0-3N)RGYAAC-3' present on promoters. Probably activates transcription of the testis-specific histone gene H1-6. The sequence is that of DNA-binding protein RFX2 (Rfx2) from Mus musculus (Mouse).